The following is a 278-amino-acid chain: MRAEIMAAMKVQPVIDVNAEISRRVNFIKARLIAAHATSLVLGISGGVDSSVCGRLCQLAVNELNQEQSTTDYKFVAVRLPYGVQADENEAQLAVDFIQPSSRMTVNIKPATDALHEQTMAAIVGNGESLPEQEKIDFIKGNVKARQRMIAQYEIAAFCQGLVVGTDHSAENITGFYTKFGDGACDLAPLFGLSKRQVRALGSTLGASSVLVNKAPTADLESDRPGLTDEEALGLSYEQIDDFLEGKPVTQQVEQTLSAIYQRTQHKRQPVPTIYDEL.

43-50 (GISGGVDS) serves as a coordination point for ATP. Asp49 lines the Mg(2+) pocket. Deamido-NAD(+) is bound at residue Arg146. Position 166 (Thr166) interacts with ATP. Glu171 serves as a coordination point for Mg(2+). Residues Lys179 and Asp186 each coordinate deamido-NAD(+). ATP-binding residues include Lys195 and Thr217. 266–267 (HK) is a deamido-NAD(+) binding site.

It belongs to the NAD synthetase family. As to quaternary structure, homodimer.

The enzyme catalyses deamido-NAD(+) + NH4(+) + ATP = AMP + diphosphate + NAD(+) + H(+). The protein operates within cofactor biosynthesis; NAD(+) biosynthesis; NAD(+) from deamido-NAD(+) (ammonia route): step 1/1. Functionally, catalyzes the ATP-dependent amidation of deamido-NAD to form NAD. Uses ammonia as a nitrogen source. This is NH(3)-dependent NAD(+) synthetase from Pseudoalteromonas translucida (strain TAC 125).